We begin with the raw amino-acid sequence, 179 residues long: MAFLSSGAYLTHQQKVLRLYKRALRHLESWCIHRDKYRYFACLLRARFDEHKNEKDMVKATQLLREAEEEFWHGQHPQPYIFPESPGGTSYERYECYKVPEWCLDDWHPSEKAMYPDYFAKREQWKKLRRESWEREVKQLQEETPVGGPRTEALPPARKQGDLPPLWWHIVTRPRERPM.

Residue Ala2 is modified to N-acetylalanine. Ser85 carries the phosphoserine modification. Residues 139–160 (QLQEETPVGGPRTEALPPARKQ) are disordered.

This sequence belongs to the complex I LYR family. As to quaternary structure, mammalian complex I is composed of 45 different subunits.

It is found in the mitochondrion inner membrane. Functionally, accessory subunit of the mitochondrial membrane respiratory chain NADH dehydrogenase (Complex I), that is believed to be not involved in catalysis. Complex I functions in the transfer of electrons from NADH to the respiratory chain. The immediate electron acceptor for the enzyme is believed to be ubiquinone. The polypeptide is NADH dehydrogenase [ubiquinone] 1 beta subcomplex subunit 9 (NDUFB9) (Bos taurus (Bovine)).